Consider the following 285-residue polypeptide: Pantothenate synthetase (285 aa).

Position 30–37 (30–37 (MGNLHDGH)) interacts with ATP. His-37 serves as the catalytic Proton donor. Residue Gln-61 coordinates (R)-pantoate. Residue Gln-61 coordinates beta-alanine. ATP is bound at residue 149–152 (GEKD). A (R)-pantoate-binding site is contributed by Gln-155. ATP-binding positions include Ile-178 and 186–189 (LSSR).

This sequence belongs to the pantothenate synthetase family. As to quaternary structure, homodimer.

Its subcellular location is the cytoplasm. It carries out the reaction (R)-pantoate + beta-alanine + ATP = (R)-pantothenate + AMP + diphosphate + H(+). The protein operates within cofactor biosynthesis; (R)-pantothenate biosynthesis; (R)-pantothenate from (R)-pantoate and beta-alanine: step 1/1. In terms of biological role, catalyzes the condensation of pantoate with beta-alanine in an ATP-dependent reaction via a pantoyl-adenylate intermediate. This chain is Pantothenate synthetase, found in Buchnera aphidicola subsp. Acyrthosiphon pisum (strain 5A).